We begin with the raw amino-acid sequence, 226 residues long: Deoxyribose-phosphate aldolase (226 aa).

Asp-94 (proton donor/acceptor) is an active-site residue. Lys-156 serves as the catalytic Schiff-base intermediate with acetaldehyde. Lys-185 (proton donor/acceptor) is an active-site residue.

Belongs to the DeoC/FbaB aldolase family. DeoC type 1 subfamily.

The protein resides in the cytoplasm. The enzyme catalyses 2-deoxy-D-ribose 5-phosphate = D-glyceraldehyde 3-phosphate + acetaldehyde. Its pathway is carbohydrate degradation; 2-deoxy-D-ribose 1-phosphate degradation; D-glyceraldehyde 3-phosphate and acetaldehyde from 2-deoxy-alpha-D-ribose 1-phosphate: step 2/2. Its function is as follows. Catalyzes a reversible aldol reaction between acetaldehyde and D-glyceraldehyde 3-phosphate to generate 2-deoxy-D-ribose 5-phosphate. The sequence is that of Deoxyribose-phosphate aldolase from Burkholderia orbicola (strain MC0-3).